A 275-amino-acid polypeptide reads, in one-letter code: MAPIGDDASQTLHDLVNKLESRVKELEDKLAHAAGGPAPAASESVRMILMGPPGAGKGTQAPKIKEKFSCCHLATGDMLRSQVAKKTPLGREAKKIMDQGGLVSDEIVIGMIKAELEGNSECKGGFILDGFPRTVVQAERLDAMLAERNQKLQHAVELQIDDSLLVSRITGRLVHPASGRSYHRVFNPPKADMKDDITGEPLVSRSDDNADALKKRLVTYHAQTAPVVGYYQKTGIWSGIDASQEPGAVWKSLLGVFDKQKGANGSILSKITGRS.

Residue 54–59 (GAGKGT) coordinates ATP. Residues 74–103 (ATGDMLRSQVAKKTPLGREAKKIMDQGGLV) are NMP. Residues T75, R80, 101 to 103 (GLV), 130 to 133 (GFPR), and Q137 contribute to the AMP site. Residues 171-208 (GRLVHPASGRSYHRVFNPPKADMKDDITGEPLVSRSDD) form an LID region. ATP-binding positions include R172 and 181 to 182 (SY). AMP is bound by residues R205 and R216. Q244 serves as a coordination point for ATP.

The protein belongs to the adenylate kinase family. AK2 subfamily. As to quaternary structure, monomer.

Its subcellular location is the cytoplasm. It localises to the cytosol. It is found in the mitochondrion intermembrane space. The enzyme catalyses AMP + ATP = 2 ADP. In terms of biological role, catalyzes the reversible transfer of the terminal phosphate group between ATP and AMP. Plays an important role in cellular energy homeostasis and in adenine nucleotide metabolism. Adenylate kinase activity is critical for regulation of the phosphate utilization and the AMP de novo biosynthesis pathways. The protein is Adenylate kinase (adk1) of Botryotinia fuckeliana (strain B05.10) (Noble rot fungus).